The primary structure comprises 529 residues: Peptide chain release factor 3 (529 aa).

The 270-residue stretch at 11–280 (AKRRTFAIIS…GLVAWAPAPM (270 aa)) folds into the tr-type G domain. GTP-binding positions include 20–27 (SHPDAGKT), 88–92 (DTPGH), and 142–145 (NKLD).

It belongs to the TRAFAC class translation factor GTPase superfamily. Classic translation factor GTPase family. PrfC subfamily.

Its subcellular location is the cytoplasm. Functionally, increases the formation of ribosomal termination complexes and stimulates activities of RF-1 and RF-2. It binds guanine nucleotides and has strong preference for UGA stop codons. It may interact directly with the ribosome. The stimulation of RF-1 and RF-2 is significantly reduced by GTP and GDP, but not by GMP. In Salmonella agona (strain SL483), this protein is Peptide chain release factor 3.